The sequence spans 144 residues: Large ribosomal subunit protein uL15 (144 aa).

The segment at 1 to 54 (MRLNTLSPAPGRVTSRKRVGRGIGSGLGKTAGRGHKGLKSRSGGTVKPGFEGGQ) is disordered. Positions 21 to 31 (RGIGSGLGKTA) are enriched in gly residues.

This sequence belongs to the universal ribosomal protein uL15 family. Part of the 50S ribosomal subunit.

Binds to the 23S rRNA. This is Large ribosomal subunit protein uL15 from Teredinibacter turnerae (strain ATCC 39867 / T7901).